Reading from the N-terminus, the 45-residue chain is C-phycocyanin beta subunit (45 aa).

It belongs to the phycobiliprotein family. In terms of assembly, heterodimer of an alpha and a beta subunit. The hererodimer further assembles into trimers and the trimers into hexamers. In terms of processing, contains two covalently linked bilin chromophores.

The protein resides in the cellular thylakoid membrane. Functionally, light-harvesting photosynthetic bile pigment-protein from the phycobiliprotein complex (phycobilisome, PBS). Phycocyanin is the major phycobiliprotein in the PBS rod. In Limnospira fusiformis (Arthrospira fusiformis), this protein is C-phycocyanin beta subunit (cpcB).